Consider the following 370-residue polypeptide: Holliday junction branch migration complex subunit RuvB (370 aa).

The segment at 1-53 (MAILSSQKQPLEPEPSKNPQSVQQPGLPPSTPEQGLLTAEVSPEERLSRTDDI) is disordered. Residues 13–214 (PEPSKNPQSV…FGLIQRLRFY (202 aa)) form a large ATPase domain (RuvB-L) region. The segment covering 43-53 (PEERLSRTDDI) has biased composition (basic and acidic residues). Residues I53, R54, G95, K98, T99, T100, 161-163 (EDF), R204, Y214, and R251 contribute to the ATP site. Residue T99 participates in Mg(2+) binding. The tract at residues 215–285 (EPEELSQIIL…IASEALQLFN (71 aa)) is small ATPAse domain (RuvB-S). The segment at 288–370 (PCGLDWTDRR…TPPDGQLSLL (83 aa)) is head domain (RuvB-H). The DNA site is built by R343 and R348.

The protein belongs to the RuvB family. As to quaternary structure, homohexamer. Forms an RuvA(8)-RuvB(12)-Holliday junction (HJ) complex. HJ DNA is sandwiched between 2 RuvA tetramers; dsDNA enters through RuvA and exits via RuvB. An RuvB hexamer assembles on each DNA strand where it exits the tetramer. Each RuvB hexamer is contacted by two RuvA subunits (via domain III) on 2 adjacent RuvB subunits; this complex drives branch migration. In the full resolvosome a probable DNA-RuvA(4)-RuvB(12)-RuvC(2) complex forms which resolves the HJ.

It is found in the cytoplasm. The enzyme catalyses ATP + H2O = ADP + phosphate + H(+). Its function is as follows. The RuvA-RuvB-RuvC complex processes Holliday junction (HJ) DNA during genetic recombination and DNA repair, while the RuvA-RuvB complex plays an important role in the rescue of blocked DNA replication forks via replication fork reversal (RFR). RuvA specifically binds to HJ cruciform DNA, conferring on it an open structure. The RuvB hexamer acts as an ATP-dependent pump, pulling dsDNA into and through the RuvAB complex. RuvB forms 2 homohexamers on either side of HJ DNA bound by 1 or 2 RuvA tetramers; 4 subunits per hexamer contact DNA at a time. Coordinated motions by a converter formed by DNA-disengaged RuvB subunits stimulates ATP hydrolysis and nucleotide exchange. Immobilization of the converter enables RuvB to convert the ATP-contained energy into a lever motion, pulling 2 nucleotides of DNA out of the RuvA tetramer per ATP hydrolyzed, thus driving DNA branch migration. The RuvB motors rotate together with the DNA substrate, which together with the progressing nucleotide cycle form the mechanistic basis for DNA recombination by continuous HJ branch migration. Branch migration allows RuvC to scan DNA until it finds its consensus sequence, where it cleaves and resolves cruciform DNA. This Cyanothece sp. (strain PCC 7425 / ATCC 29141) protein is Holliday junction branch migration complex subunit RuvB.